The primary structure comprises 356 residues: Histidinol-phosphate aminotransferase (356 aa).

Residue K214 is modified to N6-(pyridoxal phosphate)lysine.

This sequence belongs to the class-II pyridoxal-phosphate-dependent aminotransferase family. Histidinol-phosphate aminotransferase subfamily. In terms of assembly, homodimer. The cofactor is pyridoxal 5'-phosphate.

It catalyses the reaction L-histidinol phosphate + 2-oxoglutarate = 3-(imidazol-4-yl)-2-oxopropyl phosphate + L-glutamate. It participates in amino-acid biosynthesis; L-histidine biosynthesis; L-histidine from 5-phospho-alpha-D-ribose 1-diphosphate: step 7/9. In Escherichia coli O127:H6 (strain E2348/69 / EPEC), this protein is Histidinol-phosphate aminotransferase.